The following is a 243-amino-acid chain: UPF0246 protein M6_Spy1787 (243 aa).

This sequence belongs to the UPF0246 family.

The sequence is that of UPF0246 protein M6_Spy1787 from Streptococcus pyogenes serotype M6 (strain ATCC BAA-946 / MGAS10394).